The following is a 389-amino-acid chain: Phospho-N-acetylmuramoyl-pentapeptide-transferase (389 aa).

The next 10 helical transmembrane spans lie at 25–45 (RAVMATITALLIGLVCGPAVI), 73–93 (TMGGVLILLGIAVATLLWADL), 97–117 (FIWIVMLVTFGFGVIGWVDDY), 135–155 (FWQSVIGLFAAVYLAFSVSEA), 190–210 (ISYPLGVWGFIVLTYLVIVGA), 222–242 (GLVIMPVVLVGASLGVFAYVM), 259–279 (AGELLIFCSAMGGAGLAFLWF), 287–307 (FMGDVGALALGGALGTVAVIV), 311–331 (IVLFIMGGIFVAETLSVMLQV), and 366–386 (QVVVRFWIITLMLCLFGLSTL).

The protein belongs to the glycosyltransferase 4 family. MraY subfamily. Mg(2+) is required as a cofactor.

Its subcellular location is the cell inner membrane. The catalysed reaction is UDP-N-acetyl-alpha-D-muramoyl-L-alanyl-gamma-D-glutamyl-meso-2,6-diaminopimeloyl-D-alanyl-D-alanine + di-trans,octa-cis-undecaprenyl phosphate = di-trans,octa-cis-undecaprenyl diphospho-N-acetyl-alpha-D-muramoyl-L-alanyl-D-glutamyl-meso-2,6-diaminopimeloyl-D-alanyl-D-alanine + UMP. It functions in the pathway cell wall biogenesis; peptidoglycan biosynthesis. In terms of biological role, catalyzes the initial step of the lipid cycle reactions in the biosynthesis of the cell wall peptidoglycan: transfers peptidoglycan precursor phospho-MurNAc-pentapeptide from UDP-MurNAc-pentapeptide onto the lipid carrier undecaprenyl phosphate, yielding undecaprenyl-pyrophosphoryl-MurNAc-pentapeptide, known as lipid I. The protein is Phospho-N-acetylmuramoyl-pentapeptide-transferase of Paraburkholderia phytofirmans (strain DSM 17436 / LMG 22146 / PsJN) (Burkholderia phytofirmans).